The sequence spans 213 residues: ATP-dependent dethiobiotin synthetase BioD 2 (213 aa).

13–18 (DIGKTI) serves as a coordination point for ATP. Thr17 provides a ligand contact to Mg(2+). The active site involves Lys38. Thr42 is a substrate binding site. Residues Asp50 and 115–118 (EGAG) contribute to the ATP site. Residues Asp50 and Glu115 each coordinate Mg(2+).

This sequence belongs to the dethiobiotin synthetase family. As to quaternary structure, homodimer. Requires Mg(2+) as cofactor.

The protein resides in the cytoplasm. It catalyses the reaction (7R,8S)-7,8-diammoniononanoate + CO2 + ATP = (4R,5S)-dethiobiotin + ADP + phosphate + 3 H(+). Its pathway is cofactor biosynthesis; biotin biosynthesis; biotin from 7,8-diaminononanoate: step 1/2. Catalyzes a mechanistically unusual reaction, the ATP-dependent insertion of CO2 between the N7 and N8 nitrogen atoms of 7,8-diaminopelargonic acid (DAPA, also called 7,8-diammoniononanoate) to form a ureido ring. The polypeptide is ATP-dependent dethiobiotin synthetase BioD 2 (Pasteurella multocida (strain Pm70)).